Consider the following 196-residue polypeptide: Peptidyl-tRNA hydrolase (196 aa).

Residue Tyr17 participates in tRNA binding. The active-site Proton acceptor is the His22. Tyr69, Asn71, and Asn117 together coordinate tRNA.

The protein belongs to the PTH family. As to quaternary structure, monomer.

Its subcellular location is the cytoplasm. The catalysed reaction is an N-acyl-L-alpha-aminoacyl-tRNA + H2O = an N-acyl-L-amino acid + a tRNA + H(+). Functionally, hydrolyzes ribosome-free peptidyl-tRNAs (with 1 or more amino acids incorporated), which drop off the ribosome during protein synthesis, or as a result of ribosome stalling. Catalyzes the release of premature peptidyl moieties from peptidyl-tRNA molecules trapped in stalled 50S ribosomal subunits, and thus maintains levels of free tRNAs and 50S ribosomes. The chain is Peptidyl-tRNA hydrolase from Pseudarthrobacter chlorophenolicus (strain ATCC 700700 / DSM 12829 / CIP 107037 / JCM 12360 / KCTC 9906 / NCIMB 13794 / A6) (Arthrobacter chlorophenolicus).